A 297-amino-acid polypeptide reads, in one-letter code: Ribosomal RNA small subunit methyltransferase A (297 aa).

Residues Asn31, Leu33, Gly58, Glu79, Asp104, and Asn129 each contribute to the S-adenosyl-L-methionine site.

The protein belongs to the class I-like SAM-binding methyltransferase superfamily. rRNA adenine N(6)-methyltransferase family. RsmA subfamily.

It localises to the cytoplasm. The enzyme catalyses adenosine(1518)/adenosine(1519) in 16S rRNA + 4 S-adenosyl-L-methionine = N(6)-dimethyladenosine(1518)/N(6)-dimethyladenosine(1519) in 16S rRNA + 4 S-adenosyl-L-homocysteine + 4 H(+). In terms of biological role, specifically dimethylates two adjacent adenosines (A1518 and A1519) in the loop of a conserved hairpin near the 3'-end of 16S rRNA in the 30S particle. May play a critical role in biogenesis of 30S subunits. The protein is Ribosomal RNA small subunit methyltransferase A of Staphylococcus aureus (strain bovine RF122 / ET3-1).